The primary structure comprises 431 residues: Enolase (431 aa).

Gln-167 is a binding site for (2R)-2-phosphoglycerate. Glu-209 serves as the catalytic Proton donor. Residues Asp-246, Glu-289, and Asp-316 each coordinate Mg(2+). (2R)-2-phosphoglycerate is bound by residues Lys-341, Arg-370, Ser-371, and Lys-392. The Proton acceptor role is filled by Lys-341.

It belongs to the enolase family. In terms of assembly, component of the RNA degradosome, a multiprotein complex involved in RNA processing and mRNA degradation. The cofactor is Mg(2+).

The protein resides in the cytoplasm. It is found in the secreted. The protein localises to the cell surface. The enzyme catalyses (2R)-2-phosphoglycerate = phosphoenolpyruvate + H2O. It participates in carbohydrate degradation; glycolysis; pyruvate from D-glyceraldehyde 3-phosphate: step 4/5. In terms of biological role, catalyzes the reversible conversion of 2-phosphoglycerate (2-PG) into phosphoenolpyruvate (PEP). It is essential for the degradation of carbohydrates via glycolysis. This Shewanella baltica (strain OS223) protein is Enolase.